Consider the following 520-residue polypeptide: 2-isopropylmalate synthase (520 aa).

The Pyruvate carboxyltransferase domain maps to 12–274 (VLIFDTTLRD…TTGIDTTQIM (263 aa)). Residues D21, H209, H211, and N245 each coordinate Mn(2+). Residues 398–520 (RLLSLTVIAG…RLHAQHAAAE (123 aa)) form a regulatory domain region.

This sequence belongs to the alpha-IPM synthase/homocitrate synthase family. LeuA type 1 subfamily. As to quaternary structure, homodimer. Requires Mn(2+) as cofactor.

Its subcellular location is the cytoplasm. It carries out the reaction 3-methyl-2-oxobutanoate + acetyl-CoA + H2O = (2S)-2-isopropylmalate + CoA + H(+). It functions in the pathway amino-acid biosynthesis; L-leucine biosynthesis; L-leucine from 3-methyl-2-oxobutanoate: step 1/4. In terms of biological role, catalyzes the condensation of the acetyl group of acetyl-CoA with 3-methyl-2-oxobutanoate (2-ketoisovalerate) to form 3-carboxy-3-hydroxy-4-methylpentanoate (2-isopropylmalate). The chain is 2-isopropylmalate synthase from Methylobacterium nodulans (strain LMG 21967 / CNCM I-2342 / ORS 2060).